The sequence spans 121 residues: uncharacterized protein (121 aa).

The signal sequence occupies residues 1-31; the sequence is MILNNKGFIRILEATIAGIMVILVFSYLVMS.

The protein to B.burgdorferi BB0465 N-terminal region.

This is an uncharacterized protein from Methanocaldococcus jannaschii (strain ATCC 43067 / DSM 2661 / JAL-1 / JCM 10045 / NBRC 100440) (Methanococcus jannaschii).